A 382-amino-acid polypeptide reads, in one-letter code: Dual-specificity RNA methyltransferase RlmN (382 aa).

The Proton acceptor role is filled by E96. A Radical SAM core domain is found at 102–342 (QGKRGTLCVS…VRTTRGEDID (241 aa)). A disulfide bridge connects residues C109 and C345. Residues C116, C120, and C123 each coordinate [4Fe-4S] cluster. Residues 170–171 (GE), S202, 224–226 (SLH), and N302 contribute to the S-adenosyl-L-methionine site. The active-site S-methylcysteine intermediate is the C345.

This sequence belongs to the radical SAM superfamily. RlmN family. Requires [4Fe-4S] cluster as cofactor.

The protein resides in the cytoplasm. The catalysed reaction is adenosine(2503) in 23S rRNA + 2 reduced [2Fe-2S]-[ferredoxin] + 2 S-adenosyl-L-methionine = 2-methyladenosine(2503) in 23S rRNA + 5'-deoxyadenosine + L-methionine + 2 oxidized [2Fe-2S]-[ferredoxin] + S-adenosyl-L-homocysteine. It catalyses the reaction adenosine(37) in tRNA + 2 reduced [2Fe-2S]-[ferredoxin] + 2 S-adenosyl-L-methionine = 2-methyladenosine(37) in tRNA + 5'-deoxyadenosine + L-methionine + 2 oxidized [2Fe-2S]-[ferredoxin] + S-adenosyl-L-homocysteine. Its function is as follows. Specifically methylates position 2 of adenine 2503 in 23S rRNA and position 2 of adenine 37 in tRNAs. m2A2503 modification seems to play a crucial role in the proofreading step occurring at the peptidyl transferase center and thus would serve to optimize ribosomal fidelity. The chain is Dual-specificity RNA methyltransferase RlmN from Pseudomonas syringae pv. syringae (strain B728a).